A 721-amino-acid chain; its full sequence is MDGKVGNTATGCPVIHGGMTSAETSNTAWWPNALNLDILHQHDTKTNPMGKDFNYREEVKKLDFVAFKKDLHALMTDSQAWWPADWGHYGGLMIRMSWHAAGSYRVADGRGGAGTGNQRFAPLNSWPDNVNLDKARRLLWPIKKKYGNKISWADLIVLAGTIAYESMGLKTFGFGFGREDIWHPEKDVYWGSEQEWLGAKRYDDKDRQSLETPLAAVQMGLIYVNPEGVNGQPDPLRTAQDVRVTFGRMAMNDEETVALTAGGHTVGKCHGNGNAKFLGPEPEAADIEDQGLGWINKTTRGIGRNTVSSGIEGAWTTHPTQWDNGYFYLLLNYDWELKKSPAGAWQWEPIHIKEEDKPVDVEDPAIRHNPIMTDADMAIKMDPVYRKIAERFYKDPDYFAEVFARAWFKLTHRDMGPKTRYIGPDVPKEDLIWQDPVPSGNRAYDIAAAKAKIAASNLTIGEMVSTAWDSARTFRGSDKRGGANGARIRLKPQKDWEGNEPQRLTKVLRILEGIAADTGASVADVIVLAGNVGIEKAAKAAGFDIIVPFAPGRGDATDDMTDAESFDVLEPLHDGYRNWLKKAYDVRPEELMLDRTQLMGLTAHEMTVLVGGLRVLGTNHNNTQHGVFTDRVGVLTNDFFVNLTDMANVWIPSKDNLYEIRDRKAGNIKWTATRVDLVFGSNSILRSYAEVYAQDDNKGKFIQDFVAAWTKVMNADRFDLA.

A cross-link (tryptophyl-tyrosyl-methioninium (Trp-Tyr) (with M-249)) is located at residues 98-223 (WHAAGSYRVA…LAAVQMGLIY (126 aa)). Histidine 99 serves as the catalytic Proton acceptor. A cross-link (tryptophyl-tyrosyl-methioninium (Tyr-Met) (with W-98)) is located at residues 223-249 (YVNPEGVNGQPDPLRTAQDVRVTFGRM). Histidine 264 serves as a coordination point for heme b.

This sequence belongs to the peroxidase family. Peroxidase/catalase subfamily. Homodimer or homotetramer. The cofactor is heme b. In terms of processing, formation of the three residue Trp-Tyr-Met cross-link is important for the catalase, but not the peroxidase activity of the enzyme.

The enzyme catalyses H2O2 + AH2 = A + 2 H2O. The catalysed reaction is 2 H2O2 = O2 + 2 H2O. Bifunctional enzyme with both catalase and broad-spectrum peroxidase activity. This is Catalase-peroxidase 1 from Legionella pneumophila (strain Paris).